We begin with the raw amino-acid sequence, 348 residues long: MVRTINETFLKACRGERTEYVPAWYMRQAGRSQPEYRKIKEKYSLFEITHNPELCAYVTKLPVDQYNVDAAILYKDIMSPLPAIGVDVEIKSGIGPVIDSPIRSLQDVEKLGEINPEDDVPYILDTIRLLTTEMLDVPLIGFSGAPFTLASYMIEGGPSRNYHNTKAFMYAEPKAWFALMDKLADMVITYLKAQINAGVKAVQIFDSWVGAVNVADYRIFIKPAMERIFAEVRPMGVPMIMHGVGAAHLVNEWHDLPLDVVGLDWRLPIEEARARGVHRAVQGNMDPSFLLAPWPVIEEHVKGILDQGMKQPGYIFNLGHGVFPEVNPDTLKRLTTFIHEYSKEQLAK.

Substrate is bound by residues 27-31 (RQAGR), phenylalanine 46, aspartate 76, tyrosine 152, serine 207, and histidine 320.

It belongs to the uroporphyrinogen decarboxylase family. Homodimer.

Its subcellular location is the cytoplasm. The enzyme catalyses uroporphyrinogen III + 4 H(+) = coproporphyrinogen III + 4 CO2. Its pathway is porphyrin-containing compound metabolism; protoporphyrin-IX biosynthesis; coproporphyrinogen-III from 5-aminolevulinate: step 4/4. Functionally, catalyzes the decarboxylation of four acetate groups of uroporphyrinogen-III to yield coproporphyrinogen-III. The chain is Uroporphyrinogen decarboxylase from Bacillus mycoides (strain KBAB4) (Bacillus weihenstephanensis).